The primary structure comprises 202 residues: Oligoribonuclease (202 aa).

The region spanning 2–166 (LVWIDCEMTG…ADIQESIEEL (165 aa)) is the Exonuclease domain. Tyr123 is a catalytic residue.

Belongs to the oligoribonuclease family.

The protein resides in the cytoplasm. Functionally, 3'-to-5' exoribonuclease specific for small oligoribonucleotides. This chain is Oligoribonuclease, found in Cutibacterium acnes (strain DSM 16379 / KPA171202) (Propionibacterium acnes).